The sequence spans 180 residues: Large ribosomal subunit protein uL16 (180 aa).

Belongs to the universal ribosomal protein uL16 family.

This Thermococcus sibiricus (strain DSM 12597 / MM 739) protein is Large ribosomal subunit protein uL16.